We begin with the raw amino-acid sequence, 436 residues long: Serine hydroxymethyltransferase (436 aa).

(6S)-5,6,7,8-tetrahydrofolate-binding positions include Leu-133 and 137–139 (GHL). Lys-242 carries the post-translational modification N6-(pyridoxal phosphate)lysine. Residue 366–368 (SPF) coordinates (6S)-5,6,7,8-tetrahydrofolate.

Belongs to the SHMT family. Homodimer. The cofactor is pyridoxal 5'-phosphate.

The protein localises to the cytoplasm. The catalysed reaction is (6R)-5,10-methylene-5,6,7,8-tetrahydrofolate + glycine + H2O = (6S)-5,6,7,8-tetrahydrofolate + L-serine. It functions in the pathway one-carbon metabolism; tetrahydrofolate interconversion. The protein operates within amino-acid biosynthesis; glycine biosynthesis; glycine from L-serine: step 1/1. In terms of biological role, catalyzes the reversible interconversion of serine and glycine with tetrahydrofolate (THF) serving as the one-carbon carrier. This reaction serves as the major source of one-carbon groups required for the biosynthesis of purines, thymidylate, methionine, and other important biomolecules. Also exhibits THF-independent aldolase activity toward beta-hydroxyamino acids, producing glycine and aldehydes, via a retro-aldol mechanism. This chain is Serine hydroxymethyltransferase, found in Novosphingobium aromaticivorans (strain ATCC 700278 / DSM 12444 / CCUG 56034 / CIP 105152 / NBRC 16084 / F199).